We begin with the raw amino-acid sequence, 486 residues long: 2-hydroxymuconic semialdehyde dehydrogenase (486 aa).

Residues E254 and C288 contribute to the active site.

Belongs to the aldehyde dehydrogenase family. As to quaternary structure, homodimer.

It carries out the reaction (2Z,4E)-2-hydroxy-6-oxohexa-2,4-dienoate + NAD(+) + H2O = (2Z,4E)-2-hydroxyhexa-2,4-dienedioate + NADH + 2 H(+). Its pathway is aromatic compound metabolism; benzoate degradation via hydroxylation. Its function is as follows. 2-hydroxymuconic acid semialdehyde can be converted to 2-hydroxypent-2,4-dienoate either directly by the action of 2-hydroxymuconic semialdehyde hydrolase (HMSH) or by the action of three sequential enzymes, the first of which is HMSD. Can oxidize not only 2-hydroxymuconic semialdehyde and its analogs but also benzaldehyde and its analogs. This chain is 2-hydroxymuconic semialdehyde dehydrogenase (xylG), found in Pseudomonas putida (Arthrobacter siderocapsulatus).